A 338-amino-acid polypeptide reads, in one-letter code: Aspartate--ammonia ligase (338 aa).

This sequence belongs to the class-II aminoacyl-tRNA synthetase family. AsnA subfamily.

The protein resides in the cytoplasm. The catalysed reaction is L-aspartate + NH4(+) + ATP = L-asparagine + AMP + diphosphate + H(+). It functions in the pathway amino-acid biosynthesis; L-asparagine biosynthesis; L-asparagine from L-aspartate (ammonia route): step 1/1. The sequence is that of Aspartate--ammonia ligase from Lactobacillus delbrueckii subsp. bulgaricus (strain ATCC BAA-365 / Lb-18).